We begin with the raw amino-acid sequence, 68 residues long: Large ribosomal subunit protein bL33c (68 aa).

It belongs to the bacterial ribosomal protein bL33 family.

The protein resides in the plastid. It is found in the chloroplast. The polypeptide is Large ribosomal subunit protein bL33c (Piper cenocladum (Ant piper)).